A 35-amino-acid chain; its full sequence is Z-limacoditoxin(1)-Dv4 (35 aa).

The first 22 residues, 1–22 (MKKTFLPIFLVILLASYALGNP), serve as a signal peptide directing secretion. Q23 is subject to Pyrrolidone carboxylic acid. Residue P32 is modified to Proline amide.

Belongs to the limacoditoxin-1 (ACP-like) family. Expressed by the venom secretory cell of the spine. The spine is a cuticular structure containing a single large nucleated venom-secreting cell at its base. It is an independent unit capable of producing, storing and injecting venom. On the back of D.vulnerans caterpillars, spines are grouped together by 50 to 100 to form scoli, of which there are eight in D.vulnerans.

The protein localises to the secreted. In terms of biological role, potently activates insect GPCR. More precisely, it activates the ACP receptor (ACPR) from the mosquito A.aegypti (EC(50)=3.07 nM) with a potency comparable to that of the endogenous ligand. Has no activity on receptors of the closely related neuropeptides adipokinetic hormone and corazonin. In vivo, does not reveal any observable effects when injected into crickets (A.domesticus). Does not induce increase in intracellular calcium in mouse DRG neurons, suggesting that it does not induce pain. The polypeptide is Z-limacoditoxin(1)-Dv4 (Doratifera vulnerans (Mottled cup moth)).